Here is a 174-residue protein sequence, read N- to C-terminus: Large ribosomal subunit protein uL10 (174 aa).

The protein belongs to the universal ribosomal protein uL10 family. As to quaternary structure, part of the ribosomal stalk of the 50S ribosomal subunit. The N-terminus interacts with L11 and the large rRNA to form the base of the stalk. The C-terminus forms an elongated spine to which L12 dimers bind in a sequential fashion forming a multimeric L10(L12)X complex.

Functionally, forms part of the ribosomal stalk, playing a central role in the interaction of the ribosome with GTP-bound translation factors. This is Large ribosomal subunit protein uL10 from Acidiphilium cryptum (strain JF-5).